The primary structure comprises 1746 residues: Inactive tyrosine-protein kinase PEAK1 (1746 aa).

The disordered stretch occupies residues 44–66 (KTNANHSNNHRIRNTGNFRPPVA). A Phosphoserine modification is found at Ser281. Disordered regions lie at residues 334-411 (QSMV…KVPE) and 489-517 (LEGP…LTPG). Over residues 338–349 (SSDSTSPDSSLT) the composition is skewed to low complexity. The segment covering 355 to 364 (ETASSLSQKI) has biased composition (polar residues). Over residues 492–513 (PVNSPKTKSSSSTPNSPVTSSS) the composition is skewed to low complexity. 3 positions are modified to phosphoserine: Ser540, Ser572, and Ser587. The interval 551–577 (ITSGTGPNVPPRKNCHKSAPTSPTATN) is disordered. Residues Tyr635 and Tyr641 each carry the phosphotyrosine modification. Ser648 bears the Phosphoserine mark. Phosphotyrosine is present on Tyr665. 5 disordered regions span residues 671 to 700 (ESKV…HKRG), 713 to 764 (LNRG…EKAS), 802 to 920 (DADV…AADA), 1052 to 1102 (VTED…DPNP), and 1138 to 1158 (GKTD…LPKK). Over residues 675–694 (PDNTTSKTTDCLQTKGFSNS) the composition is skewed to polar residues. Positions 718 to 730 (SSPQRSYSSSHSS) are enriched in low complexity. Polar residues-rich tracts occupy residues 748–758 (TQESQMVGSSS) and 820–841 (LFTS…PTTK). A phosphoserine mark is found at Ser826 and Ser854. A compositionally biased stretch (pro residues) spans 864–874 (SEPPAPFPPPR). The segment covering 889 to 902 (HFTNWTKPTSPTRS) has biased composition (polar residues). Ser898 is modified (phosphoserine). Composition is skewed to basic and acidic residues over residues 903 to 920 (TEAE…AADA), 1052 to 1062 (VTEDFSPRDPR), and 1084 to 1094 (ELEREDGKEDI). At Thr1151 the chain carries Phosphothreonine. Tyr1188 bears the Phosphotyrosine mark. The required for homodimerization stretch occupies residues 1285–1311 (EVVGKIRSLHTDALKKLAVKCEDLFMA). One can recognise a Protein kinase domain in the interval 1313-1675 (QKDQLRFGVD…LLWGPREDLF (363 aa)). Ser1374 carries the phosphoserine modification. A disordered region spans residues 1402–1456 (LLPWEDPDDPEKDEDDMEETEEDAKGETDGKNPKPCSEAASSQKENQGVMSKKQR). Acidic residues predominate over residues 1406 to 1423 (EDPDDPEKDEDDMEETEE). The segment covering 1424–1433 (DAKGETDGKN) has biased composition (basic and acidic residues). Polar residues predominate over residues 1440-1450 (AASSQKENQGV). Residues 1670 to 1743 (PREDLFQTFT…DSLSCIVKIL (74 aa)) form a required for homodimerization region.

It belongs to the protein kinase superfamily. In terms of assembly, homodimer. Interacts with BCAR1 and CRK. Interacts with PRAG1. Interacts (when phosphorylated at Tyr-1188) with SHC1 (via PID domain). Found in a complex with PPP1CA, PPP1CC, SHC1 and PEAK1. Interacts (when phosphorylated at Tyr-635) with tensin TNS3 (when phosphorylated on the SH2 domain); TNS3 also interacts with integrins ITGB1, ITGB3 and ITGB5 and mediates their association with PEAK1. Interacts with RASAL2 and GRB2. In terms of processing, phosphorylated on tyrosine in a CSK-dependent manner in response to adhesion to fibronectin and to EGF stimulation. Phosphorylation at Tyr-665 by a Src family kinase controls subcellular localization to focal adhesion and focal adhesion dynamics. Phosphorylation at Tyr-1188 is essential for binding to SHC1. Phosphorylation at Tyr-635 promotes interaction with tensin TNS3.

Its subcellular location is the cytoplasm. It is found in the cytoskeleton. The protein resides in the cell junction. The protein localises to the focal adhesion. Functionally, probable catalytically inactive kinase. Scaffolding protein that regulates the cytoskeleton to control cell spreading and migration by modulating focal adhesion dynamics. Acts as a scaffold for mediating EGFR signaling. The polypeptide is Inactive tyrosine-protein kinase PEAK1 (PEAK1) (Homo sapiens (Human)).